Consider the following 294-residue polypeptide: Shikimate dehydrogenase (NADP(+)) (294 aa).

Residues 23–25 (SRS) and threonine 76 each bind shikimate. The active-site Proton acceptor is lysine 80. Positions 101 and 116 each coordinate shikimate. NADP(+) contacts are provided by residues 141-145 (GAGGA) and methionine 233. Tyrosine 235 is a shikimate binding site. Glycine 256 is a binding site for NADP(+).

The protein belongs to the shikimate dehydrogenase family. In terms of assembly, homodimer.

The enzyme catalyses shikimate + NADP(+) = 3-dehydroshikimate + NADPH + H(+). It participates in metabolic intermediate biosynthesis; chorismate biosynthesis; chorismate from D-erythrose 4-phosphate and phosphoenolpyruvate: step 4/7. Functionally, involved in the biosynthesis of the chorismate, which leads to the biosynthesis of aromatic amino acids. Catalyzes the reversible NADPH linked reduction of 3-dehydroshikimate (DHSA) to yield shikimate (SA). In Methylibium petroleiphilum (strain ATCC BAA-1232 / LMG 22953 / PM1), this protein is Shikimate dehydrogenase (NADP(+)).